A 108-amino-acid chain; its full sequence is Cytochrome c (108 aa).

Residues Cys19, Cys22, His23, and Met85 each coordinate heme c.

This sequence belongs to the cytochrome c family. In terms of processing, binds 1 heme c group covalently per subunit.

It localises to the mitochondrion intermembrane space. In terms of biological role, electron carrier protein. The oxidized form of the cytochrome c heme group can accept an electron from the heme group of the cytochrome c1 subunit of cytochrome reductase. Cytochrome c then transfers this electron to the cytochrome oxidase complex, the final protein carrier in the mitochondrial electron-transport chain. This chain is Cytochrome c, found in Cochliobolus lunatus (Filamentous fungus).